Reading from the N-terminus, the 180-residue chain is Symerythrin (180 aa).

The 3-(L-phenylalan-2'-yl)-L-valine (Phe-Val) cross-link spans 17-127; it reads FQDAVSHNNT…RRALETALEV (111 aa). The Ferritin-like diiron domain maps to 21 to 180; the sequence is VSHNNTDANA…RALENLLEVA (160 aa). Residues Glu37, Glu40, Glu71, Glu128, Glu131, Glu162, and His165 each coordinate Fe(3+).

In terms of assembly, monomer. The cofactor is Fe(3+).

The protein resides in the plastid. It localises to the cyanelle. Functionally, exhibits oxidase-like and peroxidase-like activities in vitro. This Cyanophora paradoxa protein is Symerythrin.